Reading from the N-terminus, the 374-residue chain is Cell division protein DivIB (374 aa).

The disordered stretch occupies residues 1-90 (MWKISNENDI…EEEHFADRLP (90 aa)). The Cytoplasmic segment spans residues 1-103 (MWKISNENDI…KTRNKRLYRR (103 aa)). Over residues 39–53 (YLKKQAEEAASKGEN) the composition is skewed to basic and acidic residues. A compositionally biased stretch (polar residues) spans 56-75 (AEVTITLQEQSQEEPQQHLP). The chain crosses the membrane as a helical span at residues 104-124 (LAFILTCLGTAILVALYFVSP). The Extracellular portion of the chain corresponds to 125-374 (LSRLSEVTVS…GENQEVQQAE (250 aa)). The 72-residue stretch at 126-197 (SRLSEVTVSG…NSFKIDIQEY (72 aa)) folds into the POTRA domain. Residues 325–374 (KESEETGSEVSEDSAVENQEVVDPNAGVATDGANNGTPTNGENQEVQQAE) are disordered. The segment covering 326 to 339 (ESEETGSEVSEDSA) has biased composition (acidic residues). Polar residues predominate over residues 356 to 374 (GANNGTPTNGENQEVQQAE).

It belongs to the FtsQ/DivIB family. DivIB subfamily.

The protein localises to the cell membrane. In terms of biological role, cell division protein that may be involved in stabilizing or promoting the assembly of the division complex. This Enterococcus faecalis (strain 62) protein is Cell division protein DivIB.